We begin with the raw amino-acid sequence, 715 residues long: Fatty acid oxidation complex subunit alpha (715 aa).

The tract at residues 1 to 190 (MIYEGKAITV…KVGAVDAVVA (190 aa)) is enoyl-CoA hydratase/isomerase. Aspartate 297 provides a ligand contact to substrate. The 3-hydroxyacyl-CoA dehydrogenase stretch occupies residues 312–715 (HDVKQAAVLG…MAKNGQRFFN (404 aa)). Residues methionine 325, aspartate 344, 401 to 403 (VVE), lysine 408, and serine 430 contribute to the NAD(+) site. Residue histidine 451 is the For 3-hydroxyacyl-CoA dehydrogenase activity of the active site. An NAD(+)-binding site is contributed by asparagine 454. Asparagine 501 and tyrosine 660 together coordinate substrate.

This sequence in the N-terminal section; belongs to the enoyl-CoA hydratase/isomerase family. In the C-terminal section; belongs to the 3-hydroxyacyl-CoA dehydrogenase family. In terms of assembly, heterotetramer of two alpha chains (FadB) and two beta chains (FadA).

It catalyses the reaction a (3S)-3-hydroxyacyl-CoA + NAD(+) = a 3-oxoacyl-CoA + NADH + H(+). The catalysed reaction is a (3S)-3-hydroxyacyl-CoA = a (2E)-enoyl-CoA + H2O. The enzyme catalyses a 4-saturated-(3S)-3-hydroxyacyl-CoA = a (3E)-enoyl-CoA + H2O. It carries out the reaction (3S)-3-hydroxybutanoyl-CoA = (3R)-3-hydroxybutanoyl-CoA. It catalyses the reaction a (3Z)-enoyl-CoA = a 4-saturated (2E)-enoyl-CoA. The catalysed reaction is a (3E)-enoyl-CoA = a 4-saturated (2E)-enoyl-CoA. Its pathway is lipid metabolism; fatty acid beta-oxidation. In terms of biological role, involved in the aerobic and anaerobic degradation of long-chain fatty acids via beta-oxidation cycle. Catalyzes the formation of 3-oxoacyl-CoA from enoyl-CoA via L-3-hydroxyacyl-CoA. It can also use D-3-hydroxyacyl-CoA and cis-3-enoyl-CoA as substrate. The protein is Fatty acid oxidation complex subunit alpha of Pseudomonas putida (strain GB-1).